We begin with the raw amino-acid sequence, 762 residues long: Phosphoribosylformylglycinamidine synthase subunit PurL (762 aa).

Residue H58 is part of the active site. Positions 61 and 105 each coordinate ATP. Residue E107 participates in Mg(2+) binding. Substrate-binding positions include 108–111 and R130; that span reads SHNH. H109 functions as the Proton acceptor in the catalytic mechanism. D131 is a Mg(2+) binding site. A substrate-binding site is contributed by Q255. D283 contributes to the Mg(2+) binding site. 327–329 contributes to the substrate binding site; it reads ESQ. The ATP site is built by N513 and G550. Residue N551 participates in Mg(2+) binding. Position 553 (S553) interacts with substrate.

Belongs to the FGAMS family. Monomer. Part of the FGAM synthase complex composed of 1 PurL, 1 PurQ and 2 PurS subunits.

Its subcellular location is the cytoplasm. It catalyses the reaction N(2)-formyl-N(1)-(5-phospho-beta-D-ribosyl)glycinamide + L-glutamine + ATP + H2O = 2-formamido-N(1)-(5-O-phospho-beta-D-ribosyl)acetamidine + L-glutamate + ADP + phosphate + H(+). It functions in the pathway purine metabolism; IMP biosynthesis via de novo pathway; 5-amino-1-(5-phospho-D-ribosyl)imidazole from N(2)-formyl-N(1)-(5-phospho-D-ribosyl)glycinamide: step 1/2. Part of the phosphoribosylformylglycinamidine synthase complex involved in the purines biosynthetic pathway. Catalyzes the ATP-dependent conversion of formylglycinamide ribonucleotide (FGAR) and glutamine to yield formylglycinamidine ribonucleotide (FGAM) and glutamate. The FGAM synthase complex is composed of three subunits. PurQ produces an ammonia molecule by converting glutamine to glutamate. PurL transfers the ammonia molecule to FGAR to form FGAM in an ATP-dependent manner. PurS interacts with PurQ and PurL and is thought to assist in the transfer of the ammonia molecule from PurQ to PurL. This Corynebacterium glutamicum (strain ATCC 13032 / DSM 20300 / JCM 1318 / BCRC 11384 / CCUG 27702 / LMG 3730 / NBRC 12168 / NCIMB 10025 / NRRL B-2784 / 534) protein is Phosphoribosylformylglycinamidine synthase subunit PurL.